The following is a 224-amino-acid chain: Urease accessory protein UreF (224 aa).

Belongs to the UreF family. UreD, UreF and UreG form a complex that acts as a GTP-hydrolysis-dependent molecular chaperone, activating the urease apoprotein by helping to assemble the nickel containing metallocenter of UreC. The UreE protein probably delivers the nickel.

The protein localises to the cytoplasm. Functionally, required for maturation of urease via the functional incorporation of the urease nickel metallocenter. The protein is Urease accessory protein UreF of Ectopseudomonas mendocina (strain ymp) (Pseudomonas mendocina).